Reading from the N-terminus, the 190-residue chain is Holliday junction branch migration complex subunit RuvA (190 aa).

Residues 1-64 (MIGRITGTLI…EDAHILYGFA (64 aa)) form a domain I region. Residues 65 to 137 (TAAERGAFRE…MRGKLGADIG (73 aa)) are domain II. The segment at 137–141 (GATAH) is flexible linker. Positions 142-190 (AVPDSQTDILNALLALGYSDKESQAALKKLPEGTGVSEGIRLALKALVR) are domain III.

This sequence belongs to the RuvA family. In terms of assembly, homotetramer. Forms an RuvA(8)-RuvB(12)-Holliday junction (HJ) complex. HJ DNA is sandwiched between 2 RuvA tetramers; dsDNA enters through RuvA and exits via RuvB. An RuvB hexamer assembles on each DNA strand where it exits the tetramer. Each RuvB hexamer is contacted by two RuvA subunits (via domain III) on 2 adjacent RuvB subunits; this complex drives branch migration. In the full resolvosome a probable DNA-RuvA(4)-RuvB(12)-RuvC(2) complex forms which resolves the HJ.

The protein localises to the cytoplasm. Functionally, the RuvA-RuvB-RuvC complex processes Holliday junction (HJ) DNA during genetic recombination and DNA repair, while the RuvA-RuvB complex plays an important role in the rescue of blocked DNA replication forks via replication fork reversal (RFR). RuvA specifically binds to HJ cruciform DNA, conferring on it an open structure. The RuvB hexamer acts as an ATP-dependent pump, pulling dsDNA into and through the RuvAB complex. HJ branch migration allows RuvC to scan DNA until it finds its consensus sequence, where it cleaves and resolves the cruciform DNA. In Bordetella petrii (strain ATCC BAA-461 / DSM 12804 / CCUG 43448), this protein is Holliday junction branch migration complex subunit RuvA.